The following is a 783-amino-acid chain: DNA ligase (783 aa).

NAD(+) contacts are provided by residues 42–46 (DAEYD), 91–92 (SL), and E125. Catalysis depends on K127, which acts as the N6-AMP-lysine intermediate. Positions 148, 185, 302, and 326 each coordinate NAD(+). Residues C421, C423, C445, and C451 each contribute to the Zn(2+) site. A BRCT domain is found at 705 to 783 (KTDTAVAGKT…EDEWLELVAG (79 aa)).

The protein belongs to the NAD-dependent DNA ligase family. LigA subfamily. Mg(2+) is required as a cofactor. The cofactor is Mn(2+).

It catalyses the reaction NAD(+) + (deoxyribonucleotide)n-3'-hydroxyl + 5'-phospho-(deoxyribonucleotide)m = (deoxyribonucleotide)n+m + AMP + beta-nicotinamide D-nucleotide.. Its function is as follows. DNA ligase that catalyzes the formation of phosphodiester linkages between 5'-phosphoryl and 3'-hydroxyl groups in double-stranded DNA using NAD as a coenzyme and as the energy source for the reaction. It is essential for DNA replication and repair of damaged DNA. This Caulobacter vibrioides (strain ATCC 19089 / CIP 103742 / CB 15) (Caulobacter crescentus) protein is DNA ligase.